Here is a 321-residue protein sequence, read N- to C-terminus: Degreening-related gene dee76 protein (321 aa).

This sequence belongs to the Mo25 family.

The sequence is that of Degreening-related gene dee76 protein (DEE76) from Auxenochlorella protothecoides (Green microalga).